The chain runs to 166 residues: Transmembrane protein 190 (166 aa).

Positions M1 to A21 are cleaved as a signal peptide. The Extracellular segment spans residues N22–M81. Residues W31–R71 form the P-type domain. 3 disulfide bridges follow: C33–C61, C43–C60, and C55–C67. A helical transmembrane segment spans residues W82–W102. Topologically, residues W103–E166 are cytoplasmic. The segment at L130–E166 is disordered.

As to expression, detected in testis and in a mixture of spermatogenic cells at various stages (testicular germ cells). Not detected in heart, brain, spleen, lung, liver, skeletal muscle and kidney.

The protein localises to the membrane. In Mus musculus (Mouse), this protein is Transmembrane protein 190 (Tmem190).